Here is a 163-residue protein sequence, read N- to C-terminus: Antimicrobial peptide 2 (163 aa).

Positions 1-22 (MLNMKSFALLMLFATLVGVTIA) are cleaved as a signal peptide. 2 Chitin-binding type-1 domains span residues 26–66 (NGKC…EIEP) and 69–107 (AGQCYRGRCSGGLCCSKYGYCGSGPAYCGLGMCQGSCLP). Cystine bridges form between Cys29–Cys42, Cys36–Cys48, and Cys41–Cys55. The propeptide occupies 58–67 (NTPLSEIEPT). Intrachain disulfides connect Cys72–Cys83, Cys77–Cys89, Cys82–Cys96, and Cys101–Cys105. Positions 100–163 (MCQGSCLPDM…QVEPAVTKAP (64 aa)) are excised as a propeptide.

In terms of tissue distribution, expressed in roots, flowers, stem and leaves.

Its function is as follows. Antimicrobial peptide. This chain is Antimicrobial peptide 2, found in Stellaria media (Common chickweed).